A 97-amino-acid polypeptide reads, in one-letter code: C-C motif chemokine 7 (97 aa).

Residues 1-23 (MQISAALLCVLLTAAAFTVHVWA) form the signal peptide. Residue glutamine 24 is modified to Pyrrolidone carboxylic acid. Residue asparagine 29 is glycosylated (N-linked (GlcNAc...) asparagine). Disulfide bonds link cysteine 33–cysteine 57 and cysteine 34–cysteine 73.

The protein belongs to the intercrine beta (chemokine CC) family. In terms of assembly, monomer. Interacts with TNFAIP6 (via Link domain).

It is found in the secreted. Chemotactic factor that attracts monocytes and eosinophils, but not neutrophils. Augments monocyte anti-tumor activity. The protein is C-C motif chemokine 7 (Ccl7) of Rattus norvegicus (Rat).